Consider the following 274-residue polypeptide: Proto-oncogene FRAT1 (274 aa).

Disordered stretches follow at residues 1 to 24 (MPCR…DDSF), 55 to 107 (AHDR…PGAV), 132 to 194 (GASA…DDPH), and 232 to 274 (GPLS…VPGS). Residues 7–23 (EEEEAGDEAEGEEDDDS) show a composition bias toward acidic residues. The segment at 191-214 (DDPHRLLQQLVLSGNLIKEAVRRL) is involved in GSK-3 binding. Phosphoserine occurs at positions 243 and 246.

It belongs to the GSK-3-binding protein family. As to quaternary structure, binds DVL1. Binds GSK-3 and prevent GSK-3-dependent phosphorylation. Phosphorylated. As to expression, highly expressed in testis. Lower level of expression in spleen, thymus and brain.

The protein localises to the cytoplasm. In terms of biological role, positively regulates the Wnt signaling pathway by stabilizing beta-catenin through the association with GSK-3. May play a role in tumor progression and collaborate with PIM1 and MYC in lymphomagenesis. The polypeptide is Proto-oncogene FRAT1 (Frat1) (Mus musculus (Mouse)).